Consider the following 306-residue polypeptide: Ectoine dioxygenase (306 aa).

L-ectoine is bound at residue glutamine 127. Lysine 133 contributes to the 2-oxoglutarate binding site. 3 residues coordinate Fe cation: histidine 144, aspartate 146, and histidine 245.

It belongs to the PhyH family. EctD subfamily. As to quaternary structure, homodimer. Fe(2+) serves as cofactor.

The enzyme catalyses L-ectoine + 2-oxoglutarate + O2 = 5-hydroxyectoine + succinate + CO2. Involved in the biosynthesis of 5-hydroxyectoine, called compatible solute, which helps organisms to survive extreme osmotic stress by acting as a highly soluble organic osmolyte. Catalyzes the 2-oxoglutarate-dependent selective hydroxylation of L-ectoine to yield (4S,5S)-5-hydroxyectoine. The protein is Ectoine dioxygenase of Sphingopyxis alaskensis (strain DSM 13593 / LMG 18877 / RB2256) (Sphingomonas alaskensis).